Consider the following 187-residue polypeptide: Ribosome-recycling factor (187 aa).

It belongs to the RRF family.

Its subcellular location is the cytoplasm. Responsible for the release of ribosomes from messenger RNA at the termination of protein biosynthesis. May increase the efficiency of translation by recycling ribosomes from one round of translation to another. The polypeptide is Ribosome-recycling factor (Ruegeria sp. (strain TM1040) (Silicibacter sp.)).